A 463-amino-acid polypeptide reads, in one-letter code: UDP-N-acetylmuramoylalanine--D-glutamate ligase (463 aa).

109 to 115 is an ATP binding site; sequence GTDGKST.

It belongs to the MurCDEF family.

The protein resides in the cytoplasm. It catalyses the reaction UDP-N-acetyl-alpha-D-muramoyl-L-alanine + D-glutamate + ATP = UDP-N-acetyl-alpha-D-muramoyl-L-alanyl-D-glutamate + ADP + phosphate + H(+). It participates in cell wall biogenesis; peptidoglycan biosynthesis. In terms of biological role, cell wall formation. Catalyzes the addition of glutamate to the nucleotide precursor UDP-N-acetylmuramoyl-L-alanine (UMA). The polypeptide is UDP-N-acetylmuramoylalanine--D-glutamate ligase (Leptospira interrogans serogroup Icterohaemorrhagiae serovar copenhageni (strain Fiocruz L1-130)).